The sequence spans 504 residues: Lysine--tRNA ligase (504 aa).

The 'HIGH' region motif lies at 23–31 (PSGPIHIGN).

It belongs to the class-I aminoacyl-tRNA synthetase family.

It localises to the cytoplasm. It carries out the reaction tRNA(Lys) + L-lysine + ATP = L-lysyl-tRNA(Lys) + AMP + diphosphate. In Picrophilus torridus (strain ATCC 700027 / DSM 9790 / JCM 10055 / NBRC 100828 / KAW 2/3), this protein is Lysine--tRNA ligase.